Reading from the N-terminus, the 341-residue chain is HTH-type transcriptional repressor PurR (341 aa).

The HTH lacI-type domain maps to 2-56 (ATIKDVAKRAGVSTTTVSHVINKTRFVAENTRAAVWAAIKELNYSPSAVARSLKV). The segment at residues 4–23 (IKDVAKRAGVSTTTVSHVIN) is a DNA-binding region (H-T-H motif). A DNA-binding region spans residues 48–56 (SAVARSLKV). Positions 73, 190, 192, 221, and 275 each coordinate hypoxanthine.

In terms of assembly, homodimer.

Its pathway is purine metabolism; purine nucleotide biosynthesis [regulation]. Is the main repressor of the genes involved in the de novo synthesis of purine nucleotides, regulating purB, purC, purEK, purF, purHD, purL, purMN and guaBA expression. PurR is allosterically activated to bind its cognate DNA by binding the purine corepressors, hypoxanthine or guanine, thereby effecting transcription repression. This is HTH-type transcriptional repressor PurR from Proteus mirabilis (strain HI4320).